The chain runs to 136 residues: Pterin-4-alpha-carbinolamine dehydratase 2 (136 aa).

Residues Lys120, Lys124, and Lys131 each carry the N6-acetyllysine; alternate modification. N6-succinyllysine; alternate is present on residues Lys120, Lys124, and Lys131.

It belongs to the pterin-4-alpha-carbinolamine dehydratase family. As to quaternary structure, homotetramer. Interacts with DYRK1B.

It catalyses the reaction (4aS,6R)-4a-hydroxy-L-erythro-5,6,7,8-tetrahydrobiopterin = (6R)-L-erythro-6,7-dihydrobiopterin + H2O. Functionally, involved in tetrahydrobiopterin biosynthesis. Seems to both prevent the formation of 7-pterins and accelerate the formation of quinonoid-BH2. Its function is as follows. Regulates the dimerization of homeodomain protein HNF-1-alpha and enhances its transcriptional activity. The sequence is that of Pterin-4-alpha-carbinolamine dehydratase 2 (Pcbd2) from Mus musculus (Mouse).